The primary structure comprises 215 residues: 23.2 kDa heat shock protein (215 aa).

Residues 1-27 (MASMRTAAAAAMLACIAVVLASTAADG) form the signal peptide. The region spanning 69–189 (DVAMLSMARV…GPRVVGIASA (121 aa)) is the sHSP domain. The interval 183-215 (VVGIASAGGDDGGKKSIGGAGEGQNQQAKKVEL) is disordered. Polar residues predominate over residues 205-215 (GQNQQAKKVEL).

Belongs to the small heat shock protein (HSP20) family. In terms of assembly, may form oligomeric structures.

It localises to the endoplasmic reticulum. This is 23.2 kDa heat shock protein (HSP23.2) from Oryza sativa subsp. japonica (Rice).